The primary structure comprises 282 residues: [PSI+] induction protein 2 (282 aa).

A helical transmembrane segment spans residues 43-63; that stretch reads IIAIVGIVLACILVIWLIGGL. N-linked (GlcNAc...) asparagine glycosylation is found at Asn91 and Asn132. Position 141 is a phosphothreonine (Thr141). Disordered stretches follow at residues 153–183 and 246–282; these read FDLEKQKEKTRKKQQKERNKEGRSPSRVAPL and LQGNSYNTPSSNHRSPYPTENYQSYQGYKPNQSDRYY. Positions 253-282 are enriched in polar residues; it reads TPSSNHRSPYPTENYQSYQGYKPNQSDRYY. N-linked (GlcNAc...) asparagine glycosylation is present at Asn276.

Its subcellular location is the membrane. Its function is as follows. Not known. Seems to be able to provoque the non-Mendelian trait [PIN(+)] which is required for the de novo appearance of the [PSI(+)] prion. The polypeptide is [PSI+] induction protein 2 (PIN2) (Saccharomyces cerevisiae (strain ATCC 204508 / S288c) (Baker's yeast)).